The primary structure comprises 33 residues: Protein YtiC (33 aa).

A helical membrane pass occupies residues 10 to 29; the sequence is FDMLSIYIIYKLIVSNNTWL.

The protein resides in the cell inner membrane. This Escherichia coli (strain K12) protein is Protein YtiC.